The following is a 295-amino-acid chain: Defective in cullin neddylation protein 1 (295 aa).

Positions 8–45 constitute a UBA-like domain; it reads QKTKLRQFVQWTQVTEAVSLNFLAKANWNIEYAMTLYF. Residues 60–272 form the DCUN1 domain; sequence VDRSNIERLF…LIDQFVDYCR (213 aa).

In terms of assembly, interacts with the cullin cul-3. Interacts with ubiquitin via its UBA-like domain. Interacts with ned-8/nedd8.

The protein localises to the nucleus. Required for neddylation of cullin components of SCF-type E3 ubiquitin ligase complexes. Neddylation of cullins play an essential role in the regulation of SCF-type complexes activity. Does not act by preventing deneddylation, but rather facilitates neddylation, possibly by acting with rbx-1 to recruit the Nedd8-charged E2 enzyme to the cullin component of SCF-type complexes. The polypeptide is Defective in cullin neddylation protein 1 (dcn-1) (Caenorhabditis elegans).